The chain runs to 195 residues: ATP-dependent Clp protease proteolytic subunit (195 aa).

Catalysis depends on serine 101, which acts as the Nucleophile. Residue histidine 126 is part of the active site.

Belongs to the peptidase S14 family.

The protein resides in the plastid. It is found in the chloroplast stroma. The enzyme catalyses Hydrolysis of proteins to small peptides in the presence of ATP and magnesium. alpha-casein is the usual test substrate. In the absence of ATP, only oligopeptides shorter than five residues are hydrolyzed (such as succinyl-Leu-Tyr-|-NHMec, and Leu-Tyr-Leu-|-Tyr-Trp, in which cleavage of the -Tyr-|-Leu- and -Tyr-|-Trp bonds also occurs).. Cleaves peptides in various proteins in a process that requires ATP hydrolysis. Has a chymotrypsin-like activity. Plays a major role in the degradation of misfolded proteins. This chain is ATP-dependent Clp protease proteolytic subunit, found in Bigelowiella natans (Pedinomonas minutissima).